Reading from the N-terminus, the 406-residue chain is Tryptophan synthase beta chain (406 aa).

An N6-(pyridoxal phosphate)lysine modification is found at K99.

Belongs to the TrpB family. In terms of assembly, tetramer of two alpha and two beta chains. Requires pyridoxal 5'-phosphate as cofactor.

It carries out the reaction (1S,2R)-1-C-(indol-3-yl)glycerol 3-phosphate + L-serine = D-glyceraldehyde 3-phosphate + L-tryptophan + H2O. Its pathway is amino-acid biosynthesis; L-tryptophan biosynthesis; L-tryptophan from chorismate: step 5/5. Its function is as follows. The beta subunit is responsible for the synthesis of L-tryptophan from indole and L-serine. The sequence is that of Tryptophan synthase beta chain from Rhizobium etli (strain CIAT 652).